A 136-amino-acid polypeptide reads, in one-letter code: MATFHFDLVSPEKIAFSGEVEQVDVPGVEGDFGVLAGHSPLVASVRPGILTVTIGGKHEKIIVLGGLAEVSEKGLTVLADTATSLADLDRAAFARQIEEMESNLKNEEPGNELDKAIARLDHFKVIQQHITSTGMH.

This sequence belongs to the ATPase epsilon chain family. In terms of assembly, F-type ATPases have 2 components, CF(1) - the catalytic core - and CF(0) - the membrane proton channel. CF(1) has five subunits: alpha(3), beta(3), gamma(1), delta(1), epsilon(1). CF(0) has three main subunits: a, b and c.

The protein resides in the cell inner membrane. Produces ATP from ADP in the presence of a proton gradient across the membrane. The sequence is that of ATP synthase epsilon chain from Afipia carboxidovorans (strain ATCC 49405 / DSM 1227 / KCTC 32145 / OM5) (Oligotropha carboxidovorans).